A 423-amino-acid polypeptide reads, in one-letter code: G2/mitotic-specific cyclin-B1 (423 aa).

Ser116 is subject to Phosphoserine; by CDK1. The residue at position 118 (Ser118) is a Phosphoserine. The residue at position 123 (Ser123) is a Phosphoserine; by PLK1. Ser137 is modified (phosphoserine). 2 interaction with CDK2 regions span residues 159-167 and 248-251; these read EYVKDIYAY and YEEM. Thr311 is subject to Phosphothreonine.

This sequence belongs to the cyclin family. Cyclin AB subfamily. In terms of assembly, interacts with the CDC2 protein kinase to form a serine/threonine kinase holoenzyme complex also known as maturation promoting factor (MPF). The cyclin subunit imparts substrate specificity to the complex. Binds HEI10. Interacts with catalytically active RALBP1 and CDC2 during mitosis to form an endocytotic complex during interphase. Interacts with CCNF; interaction is required for nuclear localization. Interacts with CDK5RAP3. Interacts with RFPL4A and UBE2A. Interacts with INCA1. Ubiquitinated by the SCF(NIPA) complex during interphase, leading to its destruction. Deubiquitinated by USP22 during G2/M phase. Post-translationally, phosphorylated by PLK1 at Ser-123 on centrosomes during prophase: phosphorylation by PLK1 does not cause nuclear import. Phosphorylation at Ser-137 was also reported to be mediated by PLK1 but Ser-123 seems to be the primary phosphorylation site.

Its subcellular location is the cytoplasm. It localises to the nucleus. It is found in the cytoskeleton. The protein resides in the microtubule organizing center. The protein localises to the centrosome. In terms of biological role, essential for the control of the cell cycle at the G2/M (mitosis) transition. The sequence is that of G2/mitotic-specific cyclin-B1 (Ccnb1) from Rattus norvegicus (Rat).